An 871-amino-acid polypeptide reads, in one-letter code: Alanine--tRNA ligase (871 aa).

H561, H565, C662, and H666 together coordinate Zn(2+).

Belongs to the class-II aminoacyl-tRNA synthetase family. It depends on Zn(2+) as a cofactor.

The protein resides in the cytoplasm. It catalyses the reaction tRNA(Ala) + L-alanine + ATP = L-alanyl-tRNA(Ala) + AMP + diphosphate. Catalyzes the attachment of alanine to tRNA(Ala) in a two-step reaction: alanine is first activated by ATP to form Ala-AMP and then transferred to the acceptor end of tRNA(Ala). Also edits incorrectly charged Ser-tRNA(Ala) and Gly-tRNA(Ala) via its editing domain. The sequence is that of Alanine--tRNA ligase from Dechloromonas aromatica (strain RCB).